We begin with the raw amino-acid sequence, 727 residues long: Protein EXECUTER 1, chloroplastic (727 aa).

Disordered regions lie at residues M1–F51, L65–G102, I340–D381, and D413–E455. A chloroplast-targeting transit peptide spans M1 to R83. 2 stretches are compositionally biased toward low complexity: residues S19–S33 and P42–F51. Over residues D413–E441 the composition is skewed to acidic residues.

The protein resides in the plastid. Its subcellular location is the chloroplast. Functionally, together with EX2, enables higher plants to perceive singlet oxygen as a stress signal in plastid that activates a genetically determined nuclear stress response program which triggers a programmed cell death (PCD). This transfer of singlet oxygen-induced stress-related signals from the plastid to the nucleus that triggers genetically controlled PCD pathway is unique to photosynthetic eukaryotes and operates under mild stress conditions, impeding photosystem II (PSII) without causing photooxidative damage of the plant. The sequence is that of Protein EXECUTER 1, chloroplastic from Oryza sativa subsp. japonica (Rice).